The primary structure comprises 284 residues: Tropomyosin (284 aa).

The interval 1–41 (MDAIKKKMQAMKLEKDNAVDRAETAEQQSRDAALRAEKAEE) is disordered. Positions 1–284 (MDAIKKKMQA…DQTFSELTGY (284 aa)) form a coiled coil. The segment covering 12 to 41 (KLEKDNAVDRAETAEQQSRDAALRAEKAEE) has biased composition (basic and acidic residues).

It belongs to the tropomyosin family. Homodimer.

In terms of biological role, tropomyosin, in association with the troponin complex, plays a central role in the calcium dependent regulation of muscle contraction. The protein is Tropomyosin of Haemaphysalis longicornis (Bush tick).